A 545-amino-acid polypeptide reads, in one-letter code: Esterase-5C (545 aa).

The first 19 residues, 1 to 19 (MLAARLIILLSFYWLSASA), serve as a signal peptide directing secretion. A disulfide bridge connects residues Cys84 and Cys103. The N-linked (GlcNAc...) asparagine glycan is linked to Asn113. The active-site Acyl-ester intermediate is the Ser207. The cysteines at positions 259 and 271 are disulfide-linked. The N-linked (GlcNAc...) asparagine glycan is linked to Asn421. His467 acts as the Charge relay system in catalysis. A glycan (N-linked (GlcNAc...) asparagine) is linked at Asn507. Residues Cys515 and Cys536 are joined by a disulfide bond.

Belongs to the type-B carboxylesterase/lipase family.

The protein localises to the secreted. It catalyses the reaction a carboxylic ester + H2O = an alcohol + a carboxylate + H(+). This is Esterase-5C (Est-5C) from Drosophila miranda (Fruit fly).